Here is a 518-residue protein sequence, read N- to C-terminus: Xylose import ATP-binding protein XylG (518 aa).

2 consecutive ABC transporter domains span residues 6–245 and 262–507; these read LQMN…VGRE and FEAR…LSQP. 38–45 provides a ligand contact to ATP; that stretch reads GENGAGKS.

Belongs to the ABC transporter superfamily. Xylose importer (TC 3.A.1.2.4) family. As to quaternary structure, the complex is composed of two ATP-binding proteins (XylG), two transmembrane proteins (XylH) and a solute-binding protein (XylF).

Its subcellular location is the cell inner membrane. It carries out the reaction D-xylose(out) + ATP + H2O = D-xylose(in) + ADP + phosphate + H(+). Its function is as follows. Part of the ABC transporter complex XylFGH involved in xylose import. Responsible for energy coupling to the transport system. This chain is Xylose import ATP-binding protein XylG, found in Pseudomonas fluorescens (strain Pf0-1).